Reading from the N-terminus, the 163-residue chain is NADH-quinone oxidoreductase subunit I (163 aa).

4Fe-4S ferredoxin-type domains follow at residues leucine 54–aspartate 84 and threonine 94–isoleucine 123. [4Fe-4S] cluster-binding residues include cysteine 64, cysteine 67, cysteine 70, cysteine 74, cysteine 103, cysteine 106, cysteine 109, and cysteine 113.

It belongs to the complex I 23 kDa subunit family. In terms of assembly, NDH-1 is composed of 14 different subunits. Subunits NuoA, H, J, K, L, M, N constitute the membrane sector of the complex. The cofactor is [4Fe-4S] cluster.

Its subcellular location is the cell inner membrane. The catalysed reaction is a quinone + NADH + 5 H(+)(in) = a quinol + NAD(+) + 4 H(+)(out). NDH-1 shuttles electrons from NADH, via FMN and iron-sulfur (Fe-S) centers, to quinones in the respiratory chain. The immediate electron acceptor for the enzyme in this species is believed to be ubiquinone. Couples the redox reaction to proton translocation (for every two electrons transferred, four hydrogen ions are translocated across the cytoplasmic membrane), and thus conserves the redox energy in a proton gradient. The polypeptide is NADH-quinone oxidoreductase subunit I (Cupriavidus necator (strain ATCC 17699 / DSM 428 / KCTC 22496 / NCIMB 10442 / H16 / Stanier 337) (Ralstonia eutropha)).